The following is a 124-amino-acid chain: Small ribosomal subunit protein uS12 (124 aa).

A 3-methylthioaspartic acid modification is found at aspartate 89.

The protein belongs to the universal ribosomal protein uS12 family. As to quaternary structure, part of the 30S ribosomal subunit. Contacts proteins S8 and S17. May interact with IF1 in the 30S initiation complex.

Its function is as follows. With S4 and S5 plays an important role in translational accuracy. In terms of biological role, interacts with and stabilizes bases of the 16S rRNA that are involved in tRNA selection in the A site and with the mRNA backbone. Located at the interface of the 30S and 50S subunits, it traverses the body of the 30S subunit contacting proteins on the other side and probably holding the rRNA structure together. The combined cluster of proteins S8, S12 and S17 appears to hold together the shoulder and platform of the 30S subunit. The protein is Small ribosomal subunit protein uS12 of Aliivibrio salmonicida (strain LFI1238) (Vibrio salmonicida (strain LFI1238)).